The primary structure comprises 229 residues: Urease accessory protein UreG (229 aa).

Residues 1–15 (MPPHFIDGEPHDHQH) are compositionally biased toward basic and acidic residues. Positions 1 to 20 (MPPHFIDGEPHDHQHDRPRR) are disordered. 34-41 (GPVGSGKT) contacts GTP.

The protein belongs to the SIMIBI class G3E GTPase family. UreG subfamily. As to quaternary structure, homodimer. UreD, UreF and UreG form a complex that acts as a GTP-hydrolysis-dependent molecular chaperone, activating the urease apoprotein by helping to assemble the nickel containing metallocenter of UreC. The UreE protein probably delivers the nickel.

The protein resides in the cytoplasm. Facilitates the functional incorporation of the urease nickel metallocenter. This process requires GTP hydrolysis, probably effectuated by UreG. The protein is Urease accessory protein UreG of Rhodococcus jostii (strain RHA1).